The following is a 577-amino-acid chain: Arginine--tRNA ligase (577 aa).

The 'HIGH' region signature appears at 122-132; the sequence is PNVAKEMHVGH.

The protein belongs to the class-I aminoacyl-tRNA synthetase family. As to quaternary structure, monomer.

The protein localises to the cytoplasm. It catalyses the reaction tRNA(Arg) + L-arginine + ATP = L-arginyl-tRNA(Arg) + AMP + diphosphate. The protein is Arginine--tRNA ligase of Klebsiella pneumoniae subsp. pneumoniae (strain ATCC 700721 / MGH 78578).